The sequence spans 223 residues: Triosephosphate isomerase (223 aa).

A substrate-binding site is contributed by 10–12 (NFK). Residue histidine 94 is the Electrophile of the active site. Glutamate 142 serves as the catalytic Proton acceptor. Substrate is bound by residues isoleucine 147, glycine 182, and 203–204 (AS).

Belongs to the triosephosphate isomerase family. In terms of assembly, homotetramer; dimer of dimers.

The protein localises to the cytoplasm. The enzyme catalyses D-glyceraldehyde 3-phosphate = dihydroxyacetone phosphate. Its pathway is carbohydrate biosynthesis; gluconeogenesis. The protein operates within carbohydrate degradation; glycolysis; D-glyceraldehyde 3-phosphate from glycerone phosphate: step 1/1. Involved in the gluconeogenesis. Catalyzes stereospecifically the conversion of dihydroxyacetone phosphate (DHAP) to D-glyceraldehyde-3-phosphate (G3P). This chain is Triosephosphate isomerase, found in Archaeoglobus fulgidus (strain ATCC 49558 / DSM 4304 / JCM 9628 / NBRC 100126 / VC-16).